The sequence spans 218 residues: N-(5'-phosphoribosyl)anthranilate isomerase (218 aa).

This sequence belongs to the TrpF family.

It carries out the reaction N-(5-phospho-beta-D-ribosyl)anthranilate = 1-(2-carboxyphenylamino)-1-deoxy-D-ribulose 5-phosphate. The protein operates within amino-acid biosynthesis; L-tryptophan biosynthesis; L-tryptophan from chorismate: step 3/5. The protein is N-(5'-phosphoribosyl)anthranilate isomerase of Rhodospirillum rubrum (strain ATCC 11170 / ATH 1.1.1 / DSM 467 / LMG 4362 / NCIMB 8255 / S1).